The following is a 345-amino-acid chain: Heat-inducible transcription repressor HrcA (345 aa).

This sequence belongs to the HrcA family.

Negative regulator of class I heat shock genes (grpE-dnaK-dnaJ and groELS operons). Prevents heat-shock induction of these operons. In Dehalococcoides mccartyi (strain ATCC BAA-2100 / JCM 16839 / KCTC 5957 / BAV1), this protein is Heat-inducible transcription repressor HrcA.